A 247-amino-acid chain; its full sequence is Triosephosphate isomerase (247 aa).

8–10 (NWK) lines the substrate pocket. The active-site Electrophile is His-94. The Proton acceptor role is filled by Glu-165. Gly-171 and Ser-210 together coordinate substrate.

It belongs to the triosephosphate isomerase family. Homodimer.

The protein localises to the cytoplasm. It carries out the reaction D-glyceraldehyde 3-phosphate = dihydroxyacetone phosphate. It functions in the pathway carbohydrate biosynthesis; gluconeogenesis. It participates in carbohydrate degradation; glycolysis; D-glyceraldehyde 3-phosphate from glycerone phosphate: step 1/1. Its function is as follows. Involved in the gluconeogenesis. Catalyzes stereospecifically the conversion of dihydroxyacetone phosphate (DHAP) to D-glyceraldehyde-3-phosphate (G3P). This chain is Triosephosphate isomerase, found in Aquifex aeolicus (strain VF5).